Reading from the N-terminus, the 751-residue chain is Photosystem I P700 chlorophyll a apoprotein A1 (751 aa).

The next 8 helical transmembrane spans lie at 73–96 (VFSA…FHGA), 159–182 (LYTT…FHYH), 198–222 (LNHH…HVSL), 294–312 (TAHH…GHMY), 349–372 (WHAQ…HHMY), 388–414 (LSLF…IFMV), 436–458 (AIIS…LYIH), and 533–551 (FLVH…LILL). 2 residues coordinate [4Fe-4S] cluster: Cys575 and Cys584. The next 2 membrane-spanning stretches (helical) occupy residues 591–612 (HVFL…HFSW) and 665–687 (LSAY…MFLF). His676 is a chlorophyll a' binding site. 2 residues coordinate chlorophyll a: Met684 and Tyr692. Position 693 (Trp693) interacts with phylloquinone. Residues 725–745 (AVGVAHYLLGGIATTWSFFLA) traverse the membrane as a helical segment.

It belongs to the PsaA/PsaB family. The PsaA/B heterodimer binds the P700 chlorophyll special pair and subsequent electron acceptors. PSI consists of a core antenna complex that captures photons, and an electron transfer chain that converts photonic excitation into a charge separation. The eukaryotic PSI reaction center is composed of at least 11 subunits. The cofactor is P700 is a chlorophyll a/chlorophyll a' dimer, A0 is one or more chlorophyll a, A1 is one or both phylloquinones and FX is a shared 4Fe-4S iron-sulfur center..

It localises to the plastid. The protein resides in the chloroplast thylakoid membrane. The catalysed reaction is reduced [plastocyanin] + hnu + oxidized [2Fe-2S]-[ferredoxin] = oxidized [plastocyanin] + reduced [2Fe-2S]-[ferredoxin]. Functionally, psaA and PsaB bind P700, the primary electron donor of photosystem I (PSI), as well as the electron acceptors A0, A1 and FX. PSI is a plastocyanin/cytochrome c6-ferredoxin oxidoreductase, converting photonic excitation into a charge separation, which transfers an electron from the donor P700 chlorophyll pair to the spectroscopically characterized acceptors A0, A1, FX, FA and FB in turn. Oxidized P700 is reduced on the lumenal side of the thylakoid membrane by plastocyanin or cytochrome c6. This chain is Photosystem I P700 chlorophyll a apoprotein A1, found in Tetradesmus obliquus (Green alga).